The sequence spans 294 residues: 4-hydroxy-tetrahydrodipicolinate synthase (294 aa).

Threonine 48 is a binding site for pyruvate. Residue tyrosine 136 is the Proton donor/acceptor of the active site. Residue lysine 164 is the Schiff-base intermediate with substrate of the active site. Valine 206 contacts pyruvate.

The protein belongs to the DapA family. As to quaternary structure, homotetramer; dimer of dimers.

The protein localises to the cytoplasm. It catalyses the reaction L-aspartate 4-semialdehyde + pyruvate = (2S,4S)-4-hydroxy-2,3,4,5-tetrahydrodipicolinate + H2O + H(+). The protein operates within amino-acid biosynthesis; L-lysine biosynthesis via DAP pathway; (S)-tetrahydrodipicolinate from L-aspartate: step 3/4. Its function is as follows. Catalyzes the condensation of (S)-aspartate-beta-semialdehyde [(S)-ASA] and pyruvate to 4-hydroxy-tetrahydrodipicolinate (HTPA). In Desulforudis audaxviator (strain MP104C), this protein is 4-hydroxy-tetrahydrodipicolinate synthase.